Here is a 227-residue protein sequence, read N- to C-terminus: Killer cell lectin-like receptor subfamily B member 1A (227 aa).

At 1–45 (MDTARVYFGLKPPRTPGAWHESPPSLPPDACRCPRSHRLALKLSC) the chain is on the cytoplasmic side. Residues 31 to 34 (CRCP) carry the LCK-binding motif motif. Residues 46–66 (AGLILLVVTLIGMSVLVRVLI) form a helical; Signal-anchor for type II membrane protein membrane-spanning segment. Topologically, residues 67-227 (QKPSIEKCYV…TLSNYVGYGH (161 aa)) are extracellular. Residues 93–212 (ECPQDWLSHR…NSDNRWICQK (120 aa)) form the C-type lectin domain. Intrachain disulfides connect C94–C105, C122–C210, and C189–C202.

In terms of assembly, homodimer; disulfide-linked. Interacts with tyrosine kinase LCK. As to expression, expressed in natural killer cells.

Its subcellular location is the membrane. Plays a stimulatory role on natural killer (NK) cell cytotoxicity. The polypeptide is Killer cell lectin-like receptor subfamily B member 1A (Klrb1a) (Mus musculus (Mouse)).